The chain runs to 90 residues: Cell division topological specificity factor (90 aa).

The interval methionine 1 to alanine 21 is disordered. Residues glycine 10–alanine 21 show a composition bias toward basic and acidic residues.

It belongs to the MinE family.

Functionally, prevents the cell division inhibition by proteins MinC and MinD at internal division sites while permitting inhibition at polar sites. This ensures cell division at the proper site by restricting the formation of a division septum at the midpoint of the long axis of the cell. The polypeptide is Cell division topological specificity factor (Acinetobacter baylyi (strain ATCC 33305 / BD413 / ADP1)).